The sequence spans 351 residues: Geranylgeranyl pyrophosphate synthase (351 aa).

Residues K55, R58, and Q93 each coordinate isopentenyl diphosphate. Positions 100 and 104 each coordinate Mg(2+). R109 contributes to the dimethylallyl diphosphate binding site. Residue R110 coordinates isopentenyl diphosphate. Dimethylallyl diphosphate-binding residues include K196, T197, Q236, K253, and K262.

Belongs to the FPP/GGPP synthase family. In terms of assembly, interacts with fps1. It depends on Mg(2+) as a cofactor.

The protein resides in the cytoplasm. It is found in the nucleus. It carries out the reaction isopentenyl diphosphate + dimethylallyl diphosphate = (2E)-geranyl diphosphate + diphosphate. The enzyme catalyses isopentenyl diphosphate + (2E)-geranyl diphosphate = (2E,6E)-farnesyl diphosphate + diphosphate. It catalyses the reaction isopentenyl diphosphate + (2E,6E)-farnesyl diphosphate = (2E,6E,10E)-geranylgeranyl diphosphate + diphosphate. The protein operates within isoprenoid biosynthesis; farnesyl diphosphate biosynthesis; farnesyl diphosphate from geranyl diphosphate and isopentenyl diphosphate: step 1/1. It functions in the pathway isoprenoid biosynthesis; geranyl diphosphate biosynthesis; geranyl diphosphate from dimethylallyl diphosphate and isopentenyl diphosphate: step 1/1. Its pathway is isoprenoid biosynthesis; geranylgeranyl diphosphate biosynthesis; geranylgeranyl diphosphate from farnesyl diphosphate and isopentenyl diphosphate: step 1/1. Its function is as follows. Catalyzes the trans-addition of the 3 molecules of IPP onto DMAPP to form geranylgeranyl pyrophosphate. Required for the membrane attachment of ypt7 and rhb1. May be involved in vesicle trafficking and protein sorting. Required for forespore membrane formation. This is Geranylgeranyl pyrophosphate synthase (spo9) from Schizosaccharomyces pombe (strain 972 / ATCC 24843) (Fission yeast).